The following is a 187-amino-acid chain: Transmembrane protein 272 (187 aa).

4 helical membrane-spanning segments follow: residues 21-41, 52-72, 107-127, and 149-169; these read CFVV…FIGM, LIPL…SLLL, IHLL…YWVF, and LYLF…LLLL.

It is found in the membrane. The protein is Transmembrane protein 272 of Homo sapiens (Human).